The following is a 273-amino-acid chain: Ribosomal RNA small subunit methyltransferase A (273 aa).

6 residues coordinate S-adenosyl-L-methionine: N18, L20, G45, E66, D91, and N113.

Belongs to the class I-like SAM-binding methyltransferase superfamily. rRNA adenine N(6)-methyltransferase family. RsmA subfamily.

Its subcellular location is the cytoplasm. It catalyses the reaction adenosine(1518)/adenosine(1519) in 16S rRNA + 4 S-adenosyl-L-methionine = N(6)-dimethyladenosine(1518)/N(6)-dimethyladenosine(1519) in 16S rRNA + 4 S-adenosyl-L-homocysteine + 4 H(+). Functionally, specifically dimethylates two adjacent adenosines (A1518 and A1519) in the loop of a conserved hairpin near the 3'-end of 16S rRNA in the 30S particle. May play a critical role in biogenesis of 30S subunits. The sequence is that of Ribosomal RNA small subunit methyltransferase A from Escherichia coli (strain 55989 / EAEC).